The sequence spans 515 residues: Maturase K (515 aa).

Belongs to the intron maturase 2 family. MatK subfamily.

Its subcellular location is the plastid. It localises to the chloroplast. Its function is as follows. Usually encoded in the trnK tRNA gene intron. Probably assists in splicing its own and other chloroplast group II introns. The chain is Maturase K from Pinus pinea (Italian stone pine).